A 293-amino-acid polypeptide reads, in one-letter code: Notch homolog 2 N-terminal-like protein C (293 aa).

EGF-like domains lie at P42–Q81, H82–Q120, T123–Q161, and W162–E198. 17 disulfide bridges follow: C46-C59, C53-C69, C71-C80, C86-C97, C91-C108, C110-C119, C127-C139, C133-C149, C151-C160, C166-C177, C171-C186, C188-C197, C204-C216, C210-C225, C227-C236, C243-C254, and C248-C264. The N-linked (GlcNAc...) asparagine glycan is linked to N64. N173 carries an N-linked (GlcNAc...) asparagine glycan. In terms of domain architecture, EGF-like 5; calcium-binding spans D200–D237. In terms of domain architecture, EGF-like 6 spans L239–E276.

It belongs to the NOTCH family. In terms of assembly, interacts with NOTCH2. Interacts with DLL1; the interaction is direct. As to expression, expressed in radial glia neural stem cells during cortical development.

The protein localises to the secreted. Human-specific protein that promotes neural progenitor proliferation and evolutionary expansion of the brain neocortex by regulating the Notch signaling pathway. Able to promote neural progenitor self-renewal, possibly by down-regulating neuronal differentiation genes, thereby delaying the differentiation of neuronal progenitors and leading to an overall final increase in neuronal production. Acts by enhancing the Notch signaling pathway via two different mechanisms that probably work in parallel to reach the same effect. Enhances Notch signaling pathway in a non-cell-autonomous manner via direct interaction with NOTCH2. Also promotes Notch signaling pathway in a cell-autonomous manner through inhibition of cis DLL1-NOTCH2 interactions, which promotes neuronal differentiation. This chain is Notch homolog 2 N-terminal-like protein C, found in Homo sapiens (Human).